We begin with the raw amino-acid sequence, 414 residues long: Glutamyl-tRNA reductase (414 aa).

Substrate is bound by residues 49-52, Ser108, 113-115, and Gln119; these read TCNR and EPQ. Cys50 acts as the Nucleophile in catalysis. 188 to 193 provides a ligand contact to NADP(+); it reads GAGQTG.

This sequence belongs to the glutamyl-tRNA reductase family. Homodimer.

It catalyses the reaction (S)-4-amino-5-oxopentanoate + tRNA(Glu) + NADP(+) = L-glutamyl-tRNA(Glu) + NADPH + H(+). The protein operates within porphyrin-containing compound metabolism; protoporphyrin-IX biosynthesis; 5-aminolevulinate from L-glutamyl-tRNA(Glu): step 1/2. Catalyzes the NADPH-dependent reduction of glutamyl-tRNA(Glu) to glutamate 1-semialdehyde (GSA). This is Glutamyl-tRNA reductase from Francisella tularensis subsp. holarctica (strain LVS).